A 671-amino-acid polypeptide reads, in one-letter code: Pescadillo homolog (671 aa).

A BRCT domain is found at 317–403 (KVRELFRGLT…LMLPVTGYRI (87 aa)). Residues 548-584 (QALRKAQEKSRQTETSEARLQRKMSEVKRQEAATRKM) are a coiled coil. Disordered stretches follow at residues 552-578 (KAQEKSRQTETSEARLQRKMSEVKRQE) and 643-671 (RRQRAEAKSKKLKERKAGNPYKKLPKWVQ).

The protein belongs to the pescadillo family.

It localises to the nucleus. The protein localises to the nucleolus. Its subcellular location is the nucleoplasm. Functionally, required for maturation of ribosomal RNAs and formation of the large ribosomal subunit. The chain is Pescadillo homolog from Leishmania infantum.